A 149-amino-acid chain; its full sequence is Transcription factor bHLH153 (149 aa).

Residues 27-76 (RHKSDLSFSSKERKDKVGERISALQQIVSPYGKTDTASVLLDAMHYIEFL) form the bHLH domain.

The protein belongs to the bHLH protein family.

Its subcellular location is the nucleus. The polypeptide is Transcription factor bHLH153 (Arabidopsis thaliana (Mouse-ear cress)).